A 378-amino-acid chain; its full sequence is Vacuolar membrane protein CAGL0J10076g (378 aa).

The interval 18-70 (RGLPRLVTTSTTPTPTTEPTTEPTTTKDETSQTSATDASTATTSTAATSTAAT) is disordered. 2 stretches are compositionally biased toward low complexity: residues 25–41 (TTST…TEPT) and 48–70 (SQTS…TAAT). A helical transmembrane segment spans residues 118–138 (FIAVGSIAGAILMLIFLWWSI). The tract at residues 299 to 368 (NDYDTPLIPD…ARDHRKTPSM (70 aa)) is disordered. Over residues 321 to 337 (RSHRKTPSNDKYHRRNR) the composition is skewed to basic residues. Low complexity predominate over residues 343-356 (SPSRSPTRTPIRTR).

Belongs to the PRM5 family.

It is found in the vacuole membrane. This chain is Vacuolar membrane protein CAGL0J10076g, found in Candida glabrata (strain ATCC 2001 / BCRC 20586 / JCM 3761 / NBRC 0622 / NRRL Y-65 / CBS 138) (Yeast).